The chain runs to 103 residues: Growth-regulated alpha protein (103 aa).

The signal sequence occupies residues 1–30 (MARAANPAPRLLGAAMLLLLLVAAGRRAAG). 2 disulfide bridges follow: cysteine 39–cysteine 65 and cysteine 41–cysteine 81.

The protein belongs to the intercrine alpha (chemokine CxC) family.

Its subcellular location is the secreted. Has chemotactic activity for neutrophils. The polypeptide is Growth-regulated alpha protein (CXCL1) (Ovis aries (Sheep)).